A 217-amino-acid chain; its full sequence is NADH dehydrogenase (ubiquinone) 23 kDa subunit (217 aa).

The N-terminal 26 residues, 1 to 26 (MSLTMRIFTASRNGQRLFGSHGARLL), are a transit peptide targeting the mitochondrion. 2 4Fe-4S ferredoxin-type domains span residues 109 to 138 (RRYP…IEAE) and 148 to 177 (TRYD…EGPN). Cys-118, Cys-121, Cys-124, Cys-128, Cys-157, Cys-160, Cys-163, and Cys-167 together coordinate [4Fe-4S] cluster.

It belongs to the complex I 23 kDa subunit family. Part of the mitochondrial membrane respiratory chain NADH dehydrogenase (Complex I). This is a component of the iron-sulfur (IP) fragment of the enzyme. [4Fe-4S] cluster serves as cofactor. In terms of tissue distribution, expressed in muscles (at protein level).

It is found in the mitochondrion. The catalysed reaction is a ubiquinone + NADH + 5 H(+)(in) = a ubiquinol + NAD(+) + 4 H(+)(out). Its function is as follows. Core subunit of the mitochondrial membrane respiratory chain NADH dehydrogenase (Complex I) that is believed to belong to the minimal assembly required for catalysis. Complex I functions in the transfer of electrons from NADH to the respiratory chain. The immediate electron acceptor for the enzyme is believed to be ubiquinone. The chain is NADH dehydrogenase (ubiquinone) 23 kDa subunit from Drosophila melanogaster (Fruit fly).